Consider the following 494-residue polypeptide: Probable cytosol aminopeptidase (494 aa).

2 residues coordinate Mn(2+): K264 and D269. K276 is an active-site residue. Mn(2+) is bound by residues D287, D346, and E348. The active site involves R350.

This sequence belongs to the peptidase M17 family. Mn(2+) serves as cofactor.

It is found in the cytoplasm. The catalysed reaction is Release of an N-terminal amino acid, Xaa-|-Yaa-, in which Xaa is preferably Leu, but may be other amino acids including Pro although not Arg or Lys, and Yaa may be Pro. Amino acid amides and methyl esters are also readily hydrolyzed, but rates on arylamides are exceedingly low.. It catalyses the reaction Release of an N-terminal amino acid, preferentially leucine, but not glutamic or aspartic acids.. Functionally, presumably involved in the processing and regular turnover of intracellular proteins. Catalyzes the removal of unsubstituted N-terminal amino acids from various peptides. The sequence is that of Probable cytosol aminopeptidase (pepA) from Pasteurella multocida (strain Pm70).